Reading from the N-terminus, the 338-residue chain is Ornithine carbamoyltransferase (338 aa).

An N-acetylserine modification is found at Ser2. Residues 67–70 (STRT), Arg118, His145, and Gln148 contribute to the carbamoyl phosphate site. Positions 185, 249, 253, and 254 each coordinate L-ornithine. Cys289 functions as the Proton acceptor in the catalytic mechanism. Residues 289–290 (CL) and Arg316 each bind carbamoyl phosphate.

The protein belongs to the aspartate/ornithine carbamoyltransferase superfamily. OTCase family. As to quaternary structure, interacts with CAR1.

It is found in the cytoplasm. The catalysed reaction is carbamoyl phosphate + L-ornithine = L-citrulline + phosphate + H(+). Its pathway is amino-acid biosynthesis; L-arginine biosynthesis; L-arginine from L-ornithine and carbamoyl phosphate: step 1/3. Forms a stable complex with CAR1 in the presence of ornithine and arginine. In this complex CAR1 retains activity, but ARG3 activity is inhibited. This chain is Ornithine carbamoyltransferase (ARG3), found in Saccharomyces cerevisiae (strain ATCC 204508 / S288c) (Baker's yeast).